The sequence spans 175 residues: 6,7-dimethyl-8-ribityllumazine synthase (175 aa).

Residues F24, 58–60 (ALE), and 82–84 (AVI) each bind 5-amino-6-(D-ribitylamino)uracil. 87-88 (ET) is a binding site for (2S)-2-hydroxy-3-oxobutyl phosphate. The Proton donor role is filled by H90. A 5-amino-6-(D-ribitylamino)uracil-binding site is contributed by N115. (2S)-2-hydroxy-3-oxobutyl phosphate is bound at residue R129. The interval 151–175 (LEPEEDDEDEDEEDEDFDDEETDRR) is disordered. Positions 152 to 175 (EPEEDDEDEDEEDEDFDDEETDRR) are enriched in acidic residues.

The protein belongs to the DMRL synthase family.

It catalyses the reaction (2S)-2-hydroxy-3-oxobutyl phosphate + 5-amino-6-(D-ribitylamino)uracil = 6,7-dimethyl-8-(1-D-ribityl)lumazine + phosphate + 2 H2O + H(+). Its pathway is cofactor biosynthesis; riboflavin biosynthesis; riboflavin from 2-hydroxy-3-oxobutyl phosphate and 5-amino-6-(D-ribitylamino)uracil: step 1/2. Catalyzes the formation of 6,7-dimethyl-8-ribityllumazine by condensation of 5-amino-6-(D-ribitylamino)uracil with 3,4-dihydroxy-2-butanone 4-phosphate. This is the penultimate step in the biosynthesis of riboflavin. The protein is 6,7-dimethyl-8-ribityllumazine synthase of Bordetella petrii (strain ATCC BAA-461 / DSM 12804 / CCUG 43448).